The chain runs to 177 residues: DELTA-stichotoxin-Hmg2b (177 aa).

Positions 3–12 (ALAGTIIAGA) are plays an important role in the hemolytic activity. The tract at residues 11 to 30 (GASLGFQILDKVLGELGKVS) is N-terminal region. Serine 54, valine 87, serine 105, proline 107, tyrosine 133, tyrosine 137, and tyrosine 138 together coordinate phosphocholine.

It belongs to the actinoporin family. Sea anemone subfamily. As to quaternary structure, octamer or nonamer in membranes. Monomer in the soluble state.

It localises to the secreted. The protein localises to the nematocyst. Its subcellular location is the target cell membrane. Its function is as follows. Pore-forming protein that forms cations-selective hydrophilic pores of around 1 nm and causes cytolysis. Pore formation is a multi-step process that involves specific recognition of membrane sphingomyelin (but neither cholesterol nor phosphatidylcholine) using aromatic rich region and adjacent phosphocholine (POC) binding site, firm binding to the membrane (mainly driven by hydrophobic interactions) accompanied by the transfer of the N-terminal region to the lipid-water interface and finally pore formation after oligomerization of monomers This toxin shows hemolytic activity. The sequence is that of DELTA-stichotoxin-Hmg2b from Heteractis magnifica (Magnificent sea anemone).